A 1400-amino-acid chain; its full sequence is DNA-directed RNA polymerase subunit beta' (1400 aa).

The Zn(2+) site is built by Cys-71, Cys-73, Cys-86, and Cys-89. Mg(2+) contacts are provided by Asp-462, Asp-464, and Asp-466. Residues Cys-811, Cys-885, Cys-892, and Cys-895 each contribute to the Zn(2+) site.

The protein belongs to the RNA polymerase beta' chain family. In terms of assembly, the RNAP catalytic core consists of 2 alpha, 1 beta, 1 beta' and 1 omega subunit. When a sigma factor is associated with the core the holoenzyme is formed, which can initiate transcription. Mg(2+) is required as a cofactor. The cofactor is Zn(2+).

The catalysed reaction is RNA(n) + a ribonucleoside 5'-triphosphate = RNA(n+1) + diphosphate. In terms of biological role, DNA-dependent RNA polymerase catalyzes the transcription of DNA into RNA using the four ribonucleoside triphosphates as substrates. This chain is DNA-directed RNA polymerase subunit beta', found in Brucella canis (strain ATCC 23365 / NCTC 10854 / RM-666).